We begin with the raw amino-acid sequence, 97 residues long: Small ribosomal subunit protein bS20 (97 aa).

The disordered stretch occupies residues 1 to 22; the sequence is MANSKSALKRIRTSERNRLRNK.

Belongs to the bacterial ribosomal protein bS20 family.

Functionally, binds directly to 16S ribosomal RNA. This chain is Small ribosomal subunit protein bS20, found in Crocosphaera subtropica (strain ATCC 51142 / BH68) (Cyanothece sp. (strain ATCC 51142)).